A 1091-amino-acid chain; its full sequence is Sodium/potassium exporting P-type ATPase 2 (1091 aa).

Topologically, residues 1–63 (MSEGTVKENN…LGDDTKIDYK (63 aa)) are cytoplasmic. The helical transmembrane segment at 64–84 (AMVLHQVCNAMIMVLVISMAI) threads the bilayer. Over 85-90 (SFAVRD) the chain is Extracellular. Residues 91–111 (WITGGVISFVIAVNVLIGLVQ) traverse the membrane as a helical segment. Residues 112–282 (EYKATKTMNS…TNVGTPLHRK (171 aa)) lie on the Cytoplasmic side of the membrane. Residues 283 to 303 (LSKLAVLLFWIAVLFAIIVMA) traverse the membrane as a helical segment. Over 304–312 (SQKFDVDKR) the chain is Extracellular. The helical transmembrane segment at 313-333 (VAIYAICVALSMIPSSLVVVL) threads the bilayer. The Cytoplasmic portion of the chain corresponds to 334 to 815 (TITMSVGAAV…RRMTDNIQKF (482 aa)). Aspartate 369 functions as the 4-aspartylphosphate intermediate in the catalytic mechanism. Mg(2+) contacts are provided by aspartate 369 and threonine 371. Positions 371 and 483 each coordinate ATP. Positions 499-525 (ALTGEKSTNQSNENDQSSLSQHNEKPG) are disordered. Over residues 503-519 (EKSTNQSNENDQSSLSQ) the composition is skewed to polar residues. 7 residues coordinate ATP: lysine 561, arginine 606, threonine 673, glycine 674, aspartate 675, arginine 732, and lysine 738. Aspartate 757 contacts Mg(2+). Residue asparagine 760 participates in ATP binding. Residues 816-836 (VLQLLAENVAQALYLIIGLVF) traverse the membrane as a helical segment. Over 837-848 (RDENGKSVFPLS) the chain is Extracellular. The helical transmembrane segment at 849–869 (PVEVLWIIVVTSCFPAMGLGL) threads the bilayer. The Cytoplasmic segment spans residues 870–885 (EKAAPDLMDRPPHDSE). The helical transmembrane segment at 886–906 (VGIFTWEVIIDTFAYGIIMTG) threads the bilayer. At 907–943 (SCMASFTGSLYGINSGRLGHDCDGTYNSSCRDVYRSR) the chain is on the extracellular side. A helical transmembrane segment spans residues 944 to 964 (SAAFATMTWCALILAWEVVDM). The Cytoplasmic segment spans residues 965 to 991 (RRSFFRMHPDTDSPVKEFFRSIWGNQF). A helical transmembrane segment spans residues 992 to 1012 (LFWSIIFGFVSAFPVVYIPVI). Topologically, residues 1013–1021 (NDKVFLHKP) are extracellular. A helical transmembrane segment spans residues 1022 to 1042 (IGAEWGLAIAFTIAFWIGAEL). Residues 1043–1091 (YKCGKRRYFKTQRAHNPENDLESNNKRDPFEAYSTSTTIHTEVNIGIKQ) are Cytoplasmic-facing.

The protein belongs to the cation transport ATPase (P-type) (TC 3.A.3) family. Type IID subfamily. The cofactor is Mg(2+). In terms of processing, the active site is phosphorylated in presence of sodium or potassium and in conditions of higher pH. Not phosphorylated in presence of calcium ions.

It is found in the cell membrane. It carries out the reaction Na(+)(in) + ATP + H2O = Na(+)(out) + ADP + phosphate + H(+). The catalysed reaction is K(+)(in) + ATP + H2O = K(+)(out) + ADP + phosphate + H(+). Catalyzes the hydrolysis of ATP coupled with the export of sodium and potassium from the cell. May export potassium less efficiently. May transport other cations such as lithium. Sodium/potassium efflux ATPases are involved in salt tolerance and maintaining the membrane potential across the plasma membrane in high salinity (Na+) or alkaline (K+) environments. In Saccharomyces cerevisiae (strain ATCC 204508 / S288c) (Baker's yeast), this protein is Sodium/potassium exporting P-type ATPase 2.